The chain runs to 188 residues: A-type ATP synthase subunit E (188 aa).

The protein belongs to the V-ATPase E subunit family. In terms of assembly, has multiple subunits with at least A(3), B(3), C, D, E, F, H, I and proteolipid K(x).

It localises to the cell membrane. Component of the A-type ATP synthase that produces ATP from ADP in the presence of a proton gradient across the membrane. The sequence is that of A-type ATP synthase subunit E from Archaeoglobus fulgidus (strain ATCC 49558 / DSM 4304 / JCM 9628 / NBRC 100126 / VC-16).